A 309-amino-acid polypeptide reads, in one-letter code: MVLGRGSLCLRSLSALGATCARRGLGQALLGLSLCHSDFRKNLTVQQDIMKVELLPALTDNYMYLIIDEDTQEAAIVDPVQPQKVIEAAKKHHVKLTTVLTTHHHWDHAGGNEKLVKLEPGLKVYGGDDRIGALTHKVTHLSTLQVGSLSVKCLSTPCHTSGHICYFVSKPGSSEPSAVFTGDTLFVAGCGKFYEGTADEMYKALLEVLGRLPPDTKVYCGHEYTVNNLKFARHVEPGNAAIQEKLAWAKEKYAIGEPTVPSTLAEEFTYNPFMRVKEKTVQQHAGETDPVTTMRAIRREKDQFKVPRD.

A mitochondrion-targeting transit peptide spans 1-24 (MVLGRGSLCLRSLSALGATCARRG). Residue K90 is modified to N6-acetyllysine. Residues H103, H105, D107, and H108 each coordinate Zn(2+). An N6-acetyllysine modification is found at K117. Residues H159 and D183 each coordinate Zn(2+). Substrate contacts are provided by residues 192-194 (KFY) and 222-224 (HEY). H222 lines the Zn(2+) pocket. K230 is modified (N6-acetyllysine; alternate). K230 carries the N6-succinyllysine; alternate modification. 298 to 301 (RREK) contributes to the substrate binding site.

It belongs to the metallo-beta-lactamase superfamily. Glyoxalase II family. In terms of assembly, monomer. Zn(2+) is required as a cofactor.

Its subcellular location is the mitochondrion matrix. The protein localises to the cytoplasm. It catalyses the reaction an S-(2-hydroxyacyl)glutathione + H2O = a 2-hydroxy carboxylate + glutathione + H(+). It carries out the reaction (R)-S-lactoylglutathione + H2O = (R)-lactate + glutathione + H(+). Its pathway is secondary metabolite metabolism; methylglyoxal degradation; (R)-lactate from methylglyoxal: step 2/2. Functionally, thiolesterase that catalyzes the hydrolysis of S-D-lactoyl-glutathione to form glutathione and D-lactic acid. In Mus musculus (Mouse), this protein is Hydroxyacylglutathione hydrolase, mitochondrial (Hagh).